The following is a 533-amino-acid chain: Basal body-orientation factor 1 (533 aa).

Residues 1–30 are disordered; it reads MPAKDKRKDKRKDKRKGKNKGKEPKKIIKS. Residues 7-19 are compositionally biased toward basic residues; it reads RKDKRKDKRKGKN. Basic and acidic residues predominate over residues 20–30; it reads KGKEPKKIIKS. Coiled coils occupy residues 34–207 and 246–368; these read AIER…EAEK and LKEA…VEQF. The interaction with MNS1 and ODF2 stretch occupies residues 277 to 533; sequence VKEKIMQLTQ…PQGLQDSDIA (257 aa). Over residues 507–517 the composition is skewed to polar residues; that stretch reads QQAPVSDSNRM. Residues 507–533 form a disordered region; that stretch reads QQAPVSDSNRMVSPDVIPQGLQDSDIA.

Belongs to the BBOF1 family. As to quaternary structure, interacts with MNS1 and ODF2. In terms of tissue distribution, expressed exclusively in the testis and predominantly expressed in male germ cells.

The protein resides in the cytoplasm. It is found in the cytoskeleton. It localises to the cilium basal body. The protein localises to the flagellum axoneme. Functionally, plays an essential role in sperm motility and male fertility by stabilizing the sperm flagellar axonemal structure. May be required for the stability of ODF2 and MANS1 proteins. Dispensable for the assembly and function of motile cilia. The sequence is that of Basal body-orientation factor 1 from Mus musculus (Mouse).